A 1171-amino-acid chain; its full sequence is ATP-dependent helicase/deoxyribonuclease subunit B (1171 aa).

The region spanning methionine 1–alanine 390 is the UvrD-like helicase ATP-binding domain. Glycine 8–serine 15 contributes to the ATP binding site. The region spanning methionine 281–aspartate 587 is the UvrD-like helicase C-terminal domain. The [4Fe-4S] cluster site is built by cysteine 805, cysteine 1129, cysteine 1132, and cysteine 1138.

The protein belongs to the helicase family. AddB/RexB type 1 subfamily. In terms of assembly, heterodimer of AddA and AddB. Mg(2+) is required as a cofactor. It depends on [4Fe-4S] cluster as a cofactor.

Functionally, the heterodimer acts as both an ATP-dependent DNA helicase and an ATP-dependent, dual-direction single-stranded exonuclease. Recognizes the chi site generating a DNA molecule suitable for the initiation of homologous recombination. The AddB subunit has 5' -&gt; 3' nuclease activity but not helicase activity. The protein is ATP-dependent helicase/deoxyribonuclease subunit B of Bacillus cereus (strain ATCC 14579 / DSM 31 / CCUG 7414 / JCM 2152 / NBRC 15305 / NCIMB 9373 / NCTC 2599 / NRRL B-3711).